The following is a 204-amino-acid chain: Large ribosomal subunit protein eL15 (204 aa).

Belongs to the eukaryotic ribosomal protein eL15 family. In terms of assembly, component of the large ribosomal subunit.

It localises to the cytoplasm. Its function is as follows. Component of the large ribosomal subunit. The ribosome is a large ribonucleoprotein complex responsible for the synthesis of proteins in the cell. The chain is Large ribosomal subunit protein eL15 (rpl15) from Monopterus albus (Swamp eel).